Reading from the N-terminus, the 61-residue chain is Small ribosomal subunit protein uS14B (61 aa).

Residues Cys24, Cys27, Cys40, and Cys43 each coordinate Zn(2+).

Belongs to the universal ribosomal protein uS14 family. Zinc-binding uS14 subfamily. In terms of assembly, part of the 30S ribosomal subunit. Contacts proteins S3 and S10. Zn(2+) serves as cofactor.

In terms of biological role, binds 16S rRNA, required for the assembly of 30S particles and may also be responsible for determining the conformation of the 16S rRNA at the A site. This Lactococcus lactis subsp. lactis (strain IL1403) (Streptococcus lactis) protein is Small ribosomal subunit protein uS14B.